The chain runs to 522 residues: Protein nucleotidyltransferase YdiU (522 aa).

Positions 109, 111, 112, 132, 144, 145, 195, and 202 each coordinate ATP. Residue D271 is the Proton acceptor of the active site. Positions 272 and 281 each coordinate Mg(2+). D281 serves as a coordination point for ATP.

The protein belongs to the SELO family. The cofactor is Mg(2+). It depends on Mn(2+) as a cofactor.

The catalysed reaction is L-seryl-[protein] + ATP = 3-O-(5'-adenylyl)-L-seryl-[protein] + diphosphate. It carries out the reaction L-threonyl-[protein] + ATP = 3-O-(5'-adenylyl)-L-threonyl-[protein] + diphosphate. It catalyses the reaction L-tyrosyl-[protein] + ATP = O-(5'-adenylyl)-L-tyrosyl-[protein] + diphosphate. The enzyme catalyses L-histidyl-[protein] + UTP = N(tele)-(5'-uridylyl)-L-histidyl-[protein] + diphosphate. The catalysed reaction is L-seryl-[protein] + UTP = O-(5'-uridylyl)-L-seryl-[protein] + diphosphate. It carries out the reaction L-tyrosyl-[protein] + UTP = O-(5'-uridylyl)-L-tyrosyl-[protein] + diphosphate. Its function is as follows. Nucleotidyltransferase involved in the post-translational modification of proteins. It can catalyze the addition of adenosine monophosphate (AMP) or uridine monophosphate (UMP) to a protein, resulting in modifications known as AMPylation and UMPylation. The protein is Protein nucleotidyltransferase YdiU of Burkholderia ambifaria (strain MC40-6).